Here is a 536-residue protein sequence, read N- to C-terminus: CRISPR-associated DNA-binding protein Cas12m (536 aa).

The tract at residues 1-59 (MPFGKKARHVKAYQFGADAPQEGMEAVLEQHRLRTDYYNALVEMELRQREERTALLANL) is recognition domain (REC1-N). A recognition domain (REC2) region spans residues 60 to 105 (AAESGLESPNQVYERLKAAGEKGIRKHPEYVAARERQKALYGHPRL). The interval 106–159 (LELQSRQREERNALRRSFGAKGLYSSNYLDVERAFDKARQSPELRFRRYSPHEG) is recognition domain (REC1-C). Positions 160 to 257 (RLAVLYTEGL…RWTVSVVVEV (98 aa)) are wedge domain (WED). Residues 258–270 (EGPPVASPTGRGA) form a linker region. Positions 271-481 (VAVDLGWRRV…QRGKPVRKLN (211 aa)) are ruvC-I. Positions 482-516 (PAHTTTDCHACGGALVGDPAKELRLYCPTCERFYD) are target nucleic-acid binding (TNB). Zn(2+) contacts are provided by cysteine 489, cysteine 492, cysteine 508, and cysteine 511. A ruvC-II region spans residues 517-536 (QDENAARNLLRRAQEVQAQV). Aspartate 518 is a Mg(2+) binding site.

Belongs to the CRISPR-associated DNA-binding protein Cas12m family. Mg(2+) serves as cofactor. Zn(2+) is required as a cofactor.

With respect to regulation, pre-crRNA processing is inhibited by EDTA. In terms of biological role, CRISPR (clustered regularly interspaced short palindromic repeat), is an adaptive immune system that provides protection against mobile genetic elements (viruses, transposable elements and conjugative plasmids). CRISPR clusters contain sequences complementary to antecedent mobile elements and target invading nucleic acids. CRISPR clusters are transcribed and processed into CRISPR RNA (crRNA). Recognizes a short motif in the CRISPR repeat sequences (the 5' PAM or protospacer adjacent motif, 5'-TT/CN-3' in this organism) to help distinguish self versus nonself, as targets within the bacterial CRISPR locus do not have PAMs. Cas12m-crRNA binds DNA in a PAM-dependent, crRNA-guided fashion. DNA-binding probably inhibits transcription, leading to gene silencing. No dsDNA, ssDNA or RNA nuclease activity is seen for the crRNA-Cas12m complex. Upon expression in E.coli as a CRISPR region preferentially binds to its associated crRNA. Is required to process pre-crRNA to mature crRNA without a tracrRNA; processing is Mg(2+)-dependent and does not require the predicted RuvC domain catalytic site. In Allomeiothermus silvanus (strain ATCC 700542 / DSM 9946 / NBRC 106475 / NCIMB 13440 / VI-R2) (Thermus silvanus), this protein is CRISPR-associated DNA-binding protein Cas12m.